Here is a 414-residue protein sequence, read N- to C-terminus: Serine/threonine transporter SstT (414 aa).

A run of 8 helical transmembrane segments spans residues 16–36, 46–66, 84–104, 143–163, 180–200, 219–239, 300–320, and 332–352; these read GSLVKQILVGLVLGILLAWIS, LGTLFVGALKAVAPVLVLMLV, ILFLYLLGTFSAALAAVVFSF, ALLNANYIGILVWAVGLGFAL, AVTFMVKLVIRFAPVGIFGLV, LVVLIGCMLLVALMVNPLLVF, MAGAAITITVLTLAAVHTLGV, and VVASLCACGASGVAGGSLLLI.

This sequence belongs to the dicarboxylate/amino acid:cation symporter (DAACS) (TC 2.A.23) family.

Its subcellular location is the cell inner membrane. The enzyme catalyses L-serine(in) + Na(+)(in) = L-serine(out) + Na(+)(out). The catalysed reaction is L-threonine(in) + Na(+)(in) = L-threonine(out) + Na(+)(out). Involved in the import of serine and threonine into the cell, with the concomitant import of sodium (symport system). The polypeptide is Serine/threonine transporter SstT (Salmonella heidelberg (strain SL476)).